The sequence spans 1436 residues: tRNA (guanosine(18)-2'-O)-methyltransferase (1436 aa).

S-adenosyl-L-methionine contacts are provided by residues 1365 to 1367 (LEQ), glycine 1389, and 1409 to 1418 (IQQFGVIRSM).

The protein belongs to the class IV-like SAM-binding methyltransferase superfamily. RNA methyltransferase TrmH family.

It localises to the cytoplasm. It carries out the reaction guanosine(18) in tRNA + S-adenosyl-L-methionine = 2'-O-methylguanosine(18) in tRNA + S-adenosyl-L-homocysteine + H(+). S-adenosyl-L-methionine-dependent 2'-O-ribose methyltransferase that catalyzes the formation of 2'-O-methylguanosine at position 18 (Gm18) in various tRNAs. The sequence is that of tRNA (guanosine(18)-2'-O)-methyltransferase from Saccharomyces cerevisiae (strain ATCC 204508 / S288c) (Baker's yeast).